Reading from the N-terminus, the 70-residue chain is Turripeptide Pal9.2 (70 aa).

The signal sequence occupies residues 1 to 20 (MKVYCLLVVLLVGLVSQTQG). The Kazal-like domain maps to 21-70 (QLDKKCNMACTLDYRPVCGSDGKTYPNRCALTSTACESQQSITVLHDGEC). 3 cysteine pairs are disulfide-bonded: C26-C56, C30-C49, and C38-C70.

Belongs to the conopeptide P-like superfamily. Expressed by the venom duct.

Its subcellular location is the secreted. In terms of biological role, acts as a neurotoxin by inhibiting an ion channel. May also act as a serine protease inhibitor, since it possess the kazal serine protease inhibitor signature. The polypeptide is Turripeptide Pal9.2 (Polystira albida (White giant-turris)).